The sequence spans 61 residues: Adipokinetic prohormone type 2 (61 aa).

Residues 1–22 (MTQSCTLTLVLVVAVLAALATA) form the signal peptide. At Gln23 the chain carries Pyrrolidone carboxylic acid. A Tryptophan amide modification is found at Trp30.

This sequence belongs to the AKH/HRTH/RPCH family. As to quaternary structure, adipokinetic hormone precursor-related peptide (APRP) can form three type of disulfide-bond dimers: p1 (alpha-alpha), p2 (alpha-beta), and p3 (beta-beta).

The protein resides in the secreted. This hormone, released from cells in the corpora cardiaca, causes release of diglycerides from the fat body and stimulation of muscles to use these diglycerides as an energy source during energy-demanding processes. The polypeptide is Adipokinetic prohormone type 2 (Locusta migratoria (Migratory locust)).